A 198-amino-acid polypeptide reads, in one-letter code: COMM domain-containing protein 9 (198 aa).

Alanine 2 is modified (N-acetylalanine). The COMM domain occupies 122–196 (RLVDLDWRVD…RIRDQLSAVA (75 aa)).

Belongs to the COMM domain-containing protein 9 family. In terms of assembly, component of the commander complex consisting of the CCC subcomplex and the retriever subcomplex. Component of the CCC (COMMD/CCDC22/CCDC93) subcomplex consisting of COMMD1, COMMD2, COMMD3, COMMD4, COMMD5, COMMD6, COMMD7, COMMD8, COMMD9, COMMD10, CCDC22 and CCDC93; within the complex forms a heterodimer with COMMD7. Interacts with RELB and NFKB1/p105. Interacts with CCDC22, CCDC93, SCNN1B, CUL1. In terms of tissue distribution, ubiquitous.

Its subcellular location is the nucleus. It is found in the cytoplasmic vesicle. In terms of biological role, scaffold protein in the commander complex that is essential for endosomal recycling of transmembrane cargos; the commander complex is composed of the CCC subcomplex and the retriever subcomplex. May modulate activity of cullin-RING E3 ubiquitin ligase (CRL) complexes. May down-regulate activation of NF-kappa-B. Modulates Na(+) transport in epithelial cells by regulation of apical cell surface expression of amiloride-sensitive sodium channel (ENaC) subunits. In Homo sapiens (Human), this protein is COMM domain-containing protein 9 (COMMD9).